A 77-amino-acid chain; its full sequence is Omega-conotoxin-like 6 (77 aa).

Residues 1-22 form the signal peptide; sequence MKLTCVVIIAVLLLTACQLITA. The propeptide occupies 23–50; that stretch reads DDSRGVQKHRSLRSTTKVSKSTSCMEAG. Intrachain disulfides connect Cys-46–Cys-61, Cys-53–Cys-64, and Cys-60–Cys-71.

Belongs to the conotoxin O1 superfamily. As to expression, expressed by the venom duct.

The protein resides in the secreted. Its function is as follows. Omega-conotoxins act at presynaptic membranes, they bind and block voltage-gated calcium channels (Cav). In Conus striatus (Striated cone), this protein is Omega-conotoxin-like 6.